A 205-amino-acid chain; its full sequence is Enhancer of split mgamma protein (205 aa).

The region spanning 15–72 is the bHLH domain; it reads YRKVMKPMLERKRRARINKCLDELKDLMVATLESEGEHVTRLEKADILELTVTHLQKM. The region spanning 93–126 is the Orange domain; it reads FRSGYIHAVNEVSRSLSQLPGMNVSLGTQLMTHL. The WRPW motif motif lies at 202–205; sequence WRPW.

As to quaternary structure, homodimer. Heterodimer with dpn. Might form higher-order oligomers. Transcription repression requires formation of a complex with a corepressor protein (Groucho). Expressed in sensory organ precursors in the wing, leg and eye imaginal disk.

Its subcellular location is the nucleus. In terms of biological role, transcriptional repressor of genes that require a bHLH protein for their transcription. May serve as a transcriptional regulator of the Achaete-scute complex (AS-C) genes. Contributes to the neural-epidermal lineage decision during early neurogenesis. Part of the Notch signaling pathway, plays a role in neuroblasts proliferation in embryos and larvae. In the larval brain, together with other self-renewal transcriptional repressors such as klu and dpn, required for type II neuroblast self-renewal and for maintaining erm in an inactive state in intermediate neural progenitors (INP) derived from type II neuroblasts. This chain is Enhancer of split mgamma protein, found in Drosophila melanogaster (Fruit fly).